Consider the following 385-residue polypeptide: MFKKTKITILGATGSIGDSTLAVIRETNDFEVFALTAFSNVEKLAELCQEFKPKFAVVPDLSKKQKLQSLVTDVEVLVGESGLEKVSSLAEIDIVMSAIVGIAGLKPTFAAAKAGKKILLANKESLVTAGHLLIDEVVKNNAQLIPVDSEHNAIFQCIDNHDKKCLPEIDKIILTASGGPFRDKQLHELTDVTPEQACNHPNWQMGRKISVDSSTMVNKALEVIEAYWLFSVSADKIGVLIHPQSVTHSMVRYVDGSYIAQLGVPDMKTPIANAMYYPKRGSVNVESLDFTKYQLTFREACFERFEALKIVFNNLQNKNYAANIVFNAANEELVAAFLNKKIKYLEIIEVNKKVTKELNFENPKNIEEVFEIDRKTREYVDSVLG.

Residues Thr-13, Gly-14, Ser-15, Ile-16, Asn-40, and Asn-122 each coordinate NADPH. Lys-123 provides a ligand contact to 1-deoxy-D-xylulose 5-phosphate. Glu-124 provides a ligand contact to NADPH. A Mn(2+)-binding site is contributed by Asp-148. Residues Ser-149, Glu-150, Ser-177, and His-200 each contribute to the 1-deoxy-D-xylulose 5-phosphate site. Glu-150 serves as a coordination point for Mn(2+). Residue Gly-206 participates in NADPH binding. 1-deoxy-D-xylulose 5-phosphate-binding residues include Ser-213, Asn-218, Lys-219, and Glu-222. Position 222 (Glu-222) interacts with Mn(2+).

The protein belongs to the DXR family. Mg(2+) serves as cofactor. Requires Mn(2+) as cofactor.

The enzyme catalyses 2-C-methyl-D-erythritol 4-phosphate + NADP(+) = 1-deoxy-D-xylulose 5-phosphate + NADPH + H(+). Its pathway is isoprenoid biosynthesis; isopentenyl diphosphate biosynthesis via DXP pathway; isopentenyl diphosphate from 1-deoxy-D-xylulose 5-phosphate: step 1/6. Its function is as follows. Catalyzes the NADPH-dependent rearrangement and reduction of 1-deoxy-D-xylulose-5-phosphate (DXP) to 2-C-methyl-D-erythritol 4-phosphate (MEP). The chain is 1-deoxy-D-xylulose 5-phosphate reductoisomerase from Francisella tularensis subsp. tularensis (strain WY96-3418).